The chain runs to 473 residues: Nuclear distribution protein PAC1 (473 aa).

The LisH domain occupies 9-41; the sequence is QAEELHKSIIAYFLSAKLPKSAAALREEIADSV. A coiled-coil region spans residues 60-87; that stretch reads TSVVRLQKKIMDLEARNSALQSELDSAT. Polar residues predominate over residues 80–93; the sequence is QSELDSATPTSLSR. The interval 80–99 is disordered; sequence QSELDSATPTSLSRRNQDPV. WD repeat units lie at residues 113–154, 156–196, 200–247, 250–289, 292–352, 354–393, 397–434, and 435–472; these read SHRN…RTIK, HTRA…KNIR, GHDH…CVRT, GHVEWVRDVVPSPDGRFLFSAGDDRVARLWDVSSGETKST, GHEH…IKTL, GHDNWVRALVFHPGGKYLLSVSDDKTIRCWDLSQEFKCVR, DAHAFVTCIRWAPNIIKDAGGMGVNGDINGGGSLALSG, and VNGIIPGSKKEDPGGGAKLGIRCVIATGSVDLNVRVFA.

This sequence belongs to the WD repeat LIS1/nudF family. In terms of assembly, self-associates. Interacts with NDL1 and dynein.

The protein localises to the cytoplasm. The protein resides in the cytoskeleton. It localises to the spindle pole. In terms of biological role, positively regulates the activity of the minus-end directed microtubule motor protein dynein. May enhance dynein-mediated microtubule sliding by targeting dynein to the microtubule plus end. Required for nuclear migration during vegetative growth as well as development. Required for retrograde early endosome (EE) transport from the hyphal tip. Required for localization of dynein to the mitotic spindle poles. Recruits additional proteins to the dynein complex at SPBs. The protein is Nuclear distribution protein PAC1 of Ajellomyces dermatitidis (strain ER-3 / ATCC MYA-2586) (Blastomyces dermatitidis).